The primary structure comprises 1031 residues: MDKWKYARLAQFLFTLSLLFLETSFGLGGNKTLCLDKERDALLEFKRGLTDSFDHLSTWGDEEDKQECCKWKGIECDRRTGHVTVIDLHNKFTCSAGASACFAPRLTGKLSPSLLELEYLNYLDLSVNEFERSEIPRFIGSLKRLEYLNLSASFFSGVIPIQFQNLTSLRTLDLGENNLIVKDLRWLSHLSSLEFLSLSSSNFQVNNWFQEITKVPSLKELDLSGCGLSKLVPSQADLANSSLISLSVLHLCCNEFSSSSEYSWVFNLTTSLTSIDLLYNQLSGQIDDRFGTLMYLEHLDLANNLKIEGGVPSSFGNLTRLRHLDMSNTQTVQWLPELFLRLSGSRKSLEVLGLNENSLFGSIVNATRFSSLKKLYLQKNMLNGSFMESAGQVSTLEYLDLSENQMRGALPDLALFPSLRELHLGSNQFRGRIPQGIGKLSQLRILDVSSNRLEGLPESMGQLSNLESFDASYNVLKGTITESHLSNLSSLVDLDLSFNSLALKTSFNWLPPFQLQVISLPSCNLGPSFPKWLQNQNNYTVLDISLASISDTLPSWFSSFPPDLKILNLSNNQISGRVSDLIENTYGYRVIDLSYNNFSGALPLVPTNVQIFYLHKNQFFGSISSICRSRTSPTSLDLSHNQFSGELPDCWMNMTSLAVLNLAYNNFSGEIPHSLGSLTNLKALYIRQNSLSGMLPSFSQCQGLQILDLGGNKLTGSIPGWIGTDLLNLRILSLRFNRLHGSIPSIICQLQFLQILDLSANGLSGKIPHCFNNFTLLYQDNNSGEPMEFIVQGFYGKFPRRYLYIGDLLVQWKNQESEYKNPLLYLKTIDLSSNELIGGVPKEIADMRGLKSLNLSRNELNGTVIEGIGQMRMLESLDMSRNQLSGVIPQDLANLTFLSVLDLSNNQLSGRIPSSTQLQSFDRSSYSDNAQLCGPPLQECPGYAPPSPLIDHGSNNNPQEHDEEEEFPSLEFYISMVLSFFVAFWGILGCLIVNSSWRNAYFKFLTDTTSWLDMISRVWFARLKKKLRRAR.

The signal sequence occupies residues 1–29; that stretch reads MDKWKYARLAQFLFTLSLLFLETSFGLGG. Asn30 carries an N-linked (GlcNAc...) asparagine glycan. An N-cap region spans residues 30–113; the sequence is NKTLCLDKER…PRLTGKLSPS (84 aa). At 30-971 the chain is on the extracellular side; the sequence is NKTLCLDKER…DEEEEFPSLE (942 aa). An LRR 1 repeat occupies 117 to 140; the sequence is LEYLNYLDLSVNEFERSEIPRFIG. The stretch at 142 to 165 is one LRR 2; degenerate repeat; sequence LKRLEYLNLSASFFSGVIPIQFQN. Asn149 and Asn165 each carry an N-linked (GlcNAc...) asparagine glycan. LRR repeat units follow at residues 166–189, 191–215, 216–240, and 243–266; these read LTSLRTLDLGENNLIVKDLRWLSH, SSLEFLSLSSSNFQVNNWFQEITKV, PSLKELDLSGCGLSKLVPSQADLAN, and LISLSVLHLCCNEFSSSSEYSWVF. N-linked (GlcNAc...) asparagine glycosylation occurs at Asn240. Asn267 carries an N-linked (GlcNAc...) asparagine glycan. LRR repeat units follow at residues 269 to 292, 293 to 317, 318 to 341, 346 to 369, 370 to 393, 394 to 416, 417 to 440, 441 to 463, 465 to 487, 488 to 509, 512 to 536, 538 to 559, 561 to 584, and 586 to 611; these read TTSLTSIDLLYNQLSGQIDDRFGT, LMYLEHLDLANNLKIEGGVPSSFGN, LTRLRHLDMSNTQTVQWLPELFLR, RKSLEVLGLNENSLFGSIVNATRF, SSLKKLYLQKNMLNGSFMESAGQV, STLEYLDLSENQMRGALPDLALF, PSLRELHLGSNQFRGRIPQGIGKL, SQLRILDVSSNRLEGLPESMGQL, NLESFDASYNVLKGTITESHLSN, LSSLVDLDLSFNSLALKTSFNW, PFQLQVISLPSCNLGPSFPKWLQNQ, NYTVLDISLASISDTLPSWFSS, PPDLKILNLSNNQISGRVSDLIEN, and YGYRVIDLSYNNFSGALPLVPTNVQI. Residue Asn317 is glycosylated (N-linked (GlcNAc...) asparagine). N-linked (GlcNAc...) asparagine glycans are attached at residues Asn365 and Asn383. Residue Asn487 is glycosylated (N-linked (GlcNAc...) asparagine). Asn538, Asn568, and Asn597 each carry an N-linked (GlcNAc...) asparagine glycan. The LRR 21; degenerate repeat unit spans residues 612 to 629; that stretch reads FYLHKNQFFGSISSICRS. LRR repeat units follow at residues 630–654, 655–678, 679–703, 705–725, 726–750, and 752–773; these read RTSPTSLDLSHNQFSGELPDCWMNM, TSLAVLNLAYNNFSGEIPHSLGSL, TNLKALYIRQNSLSGMLPSFSQCQG, QILDLGGNKLTGSIPGWIGTD, LLNLRILSLRFNRLHGSIPSIICQL, and FLQILDLSANGLSGKIPHCFNN. N-linked (GlcNAc...) asparagine glycosylation is found at Asn653 and Asn666. N-linked (GlcNAc...) asparagine glycosylation is found at Asn773 and Asn781. 4 LRR repeats span residues 823–847, 848–871, 872–895, and 896–918; these read LLYLKTIDLSSNELIGGVPKEIADM, RGLKSLNLSRNELNGTVIEGIGQM, RMLESLDMSRNQLSGVIPQDLANL, and TFLSVLDLSNNQLSGRIPSSTQL. 3 N-linked (GlcNAc...) asparagine glycosylation sites follow: Asn854, Asn861, and Asn894. A C-cap/acidic domain region spans residues 919-971; that stretch reads QSFDRSSYSDNAQLCGPPLQECPGYAPPSPLIDHGSNNNPQEHDEEEEFPSLE. The chain crosses the membrane as a helical span at residues 972-992; it reads FYISMVLSFFVAFWGILGCLI. Residues 993–1031 lie on the Cytoplasmic side of the membrane; sequence VNSSWRNAYFKFLTDTTSWLDMISRVWFARLKKKLRRAR.

The protein belongs to the RLP family. As to quaternary structure, interacts with EIX elicitor protein.

It is found in the cell membrane. Its function is as follows. Involved in plant defense. Confers resistance to the fungal pathogen T.viride through recognition of the EIX elicitor protein. The sequence is that of Receptor-like protein EIX1 from Solanum lycopersicum (Tomato).